The chain runs to 326 residues: Glycerol-3-phosphate dehydrogenase [NAD(P)+] (326 aa).

4 residues coordinate NADPH: W16, R36, R37, and K106. Residues K106 and G132 each coordinate sn-glycerol 3-phosphate. A136 contributes to the NADPH binding site. K187, D240, S250, R251, and N252 together coordinate sn-glycerol 3-phosphate. The Proton acceptor role is filled by K187. NADPH is bound at residue R251. The NADPH site is built by V271 and E273.

The protein belongs to the NAD-dependent glycerol-3-phosphate dehydrogenase family.

It localises to the cytoplasm. It catalyses the reaction sn-glycerol 3-phosphate + NAD(+) = dihydroxyacetone phosphate + NADH + H(+). The enzyme catalyses sn-glycerol 3-phosphate + NADP(+) = dihydroxyacetone phosphate + NADPH + H(+). It functions in the pathway membrane lipid metabolism; glycerophospholipid metabolism. In terms of biological role, catalyzes the reduction of the glycolytic intermediate dihydroxyacetone phosphate (DHAP) to sn-glycerol 3-phosphate (G3P), the key precursor for phospholipid synthesis. The protein is Glycerol-3-phosphate dehydrogenase [NAD(P)+] of Deinococcus geothermalis (strain DSM 11300 / CIP 105573 / AG-3a).